The sequence spans 555 residues: Phosphomethylpyrimidine synthase (555 aa).

A disordered region spans residues 78-104; it reads VRDRWGFDNGSAESTKGELSMSERKPR. Substrate is bound by residues Asn-191, Met-220, Tyr-249, His-285, 305-307, 346-349, and Glu-385; these read SRG and DALR. His-389 serves as a coordination point for Zn(2+). Tyr-412 serves as a coordination point for substrate. His-453 provides a ligand contact to Zn(2+). Positions 535, 538, and 543 each coordinate [4Fe-4S] cluster.

It belongs to the ThiC family. The cofactor is [4Fe-4S] cluster.

It carries out the reaction 5-amino-1-(5-phospho-beta-D-ribosyl)imidazole + S-adenosyl-L-methionine = 4-amino-2-methyl-5-(phosphooxymethyl)pyrimidine + CO + 5'-deoxyadenosine + formate + L-methionine + 3 H(+). It participates in cofactor biosynthesis; thiamine diphosphate biosynthesis. Its function is as follows. Catalyzes the synthesis of the hydroxymethylpyrimidine phosphate (HMP-P) moiety of thiamine from aminoimidazole ribotide (AIR) in a radical S-adenosyl-L-methionine (SAM)-dependent reaction. The chain is Phosphomethylpyrimidine synthase from Chlorobaculum parvum (strain DSM 263 / NCIMB 8327) (Chlorobium vibrioforme subsp. thiosulfatophilum).